Consider the following 203-residue polypeptide: MKSRNGPLRVGIGGPVGSGKTALTEKLCKAMRDNYSVAVVTNDIYTTEDAEALVRMQALPSDRIVGVETGGCPHTAIREDATINLQAIAGLNQRIPDLDVVFIESGGDNLAATFSPDLADITIYVISVCQGEEIPRKGGPGITRSDLLVINKKDLAPYVGADLEVMDRDATRMRASRPFVFSDMKRGDGVSSIVSFLREQGGL.

A GTP-binding site is contributed by 14-21 (GPVGSGKT).

It belongs to the SIMIBI class G3E GTPase family. UreG subfamily. As to quaternary structure, homodimer. UreD, UreF and UreG form a complex that acts as a GTP-hydrolysis-dependent molecular chaperone, activating the urease apoprotein by helping to assemble the nickel containing metallocenter of UreC. The UreE protein probably delivers the nickel.

It localises to the cytoplasm. In terms of biological role, facilitates the functional incorporation of the urease nickel metallocenter. This process requires GTP hydrolysis, probably effectuated by UreG. The polypeptide is Urease accessory protein UreG (Rhizobium leguminosarum bv. trifolii (strain WSM2304)).